Here is a 198-residue protein sequence, read N- to C-terminus: GTP-binding protein RHO1 (198 aa).

16-23 (GDGACGKT) is a binding site for GTP. An Effector region motif is present at residues 38–46 (YVPTVFENY). Residues 63-67 (DTAGQ) and 121-124 (CKSD) each bind GTP. Position 195 is a cysteine methyl ester (Cys195). Cys195 is lipidated: S-geranylgeranyl cysteine. The propeptide at 196 to 198 (VVL) is removed in mature form.

This sequence belongs to the small GTPase superfamily. Rho family.

Its subcellular location is the cell membrane. This Candida albicans (strain SC5314 / ATCC MYA-2876) (Yeast) protein is GTP-binding protein RHO1 (RHO1).